The sequence spans 1038 residues: Protein argonaute 1D (1038 aa).

Disordered regions lie at residues Met1–Pro58 and Ala110–Leu134. Gly residues-rich tracts occupy residues Arg18 to Arg29 and Gly43 to Tyr52. Residues Pro115–Leu134 show a composition bias toward low complexity. Residues Pro380–Glu493 enclose the PAZ domain. Positions Leu669–Glu990 constitute a Piwi domain. Residues Asp992 to Val1021 are disordered.

Belongs to the argonaute family. Ago subfamily.

In terms of biological role, probably involved in the RNA silencing pathway. May bind to short RNAs such as microRNAs (miRNAs) or short interfering RNAs (siRNAs), and represses the translation of mRNAs which are complementary to them. The chain is Protein argonaute 1D (AGO1D) from Oryza sativa subsp. japonica (Rice).